Reading from the N-terminus, the 81-residue chain is Three-finger toxin MALT0051C (81 aa).

The signal sequence occupies residues 1 to 21; the sequence is MKTLLLTLVVVTVVCLDFGHT. Disulfide bonds link cysteine 24–cysteine 43, cysteine 38–cysteine 60, cysteine 62–cysteine 73, and cysteine 74–cysteine 79.

The protein belongs to the three-finger toxin family. Short-chain subfamily. Type I alpha-neurotoxin sub-subfamily. As to expression, expressed by the venom gland.

The protein localises to the secreted. Its function is as follows. Binds to muscle nicotinic acetylcholine receptor (nAChR) and inhibit acetylcholine from binding to the receptor, thereby impairing neuromuscular transmission. The sequence is that of Three-finger toxin MALT0051C from Micrurus altirostris (Uruguayan coral snake).